The sequence spans 87 residues: Small ribosomal subunit protein bS20 (87 aa).

The segment at 1-26 is disordered; the sequence is MANTKSALKRIRQTATRTARNRAVTS. The segment covering 13–23 has biased composition (low complexity); that stretch reads QTATRTARNRA.

The protein belongs to the bacterial ribosomal protein bS20 family.

Its function is as follows. Binds directly to 16S ribosomal RNA. In Akkermansia muciniphila (strain ATCC BAA-835 / DSM 22959 / JCM 33894 / BCRC 81048 / CCUG 64013 / CIP 107961 / Muc), this protein is Small ribosomal subunit protein bS20.